The primary structure comprises 763 residues: Protein translocase subunit SecA 2 (763 aa).

ATP-binding positions include Q83, 101-105 (GEGKT), and D490.

This sequence belongs to the SecA family. Monomer and homodimer. Part of the essential Sec protein translocation apparatus which comprises SecA, SecYEG and auxiliary proteins SecDF. Other proteins may also be involved.

The protein localises to the cell membrane. It localises to the cytoplasm. It catalyses the reaction ATP + H2O + cellular proteinSide 1 = ADP + phosphate + cellular proteinSide 2.. In terms of biological role, part of the Sec protein translocase complex. Interacts with the SecYEG preprotein conducting channel. Has a central role in coupling the hydrolysis of ATP to the transfer of proteins into and across the cell membrane, serving as an ATP-driven molecular motor driving the stepwise translocation of polypeptide chains across the membrane. The sequence is that of Protein translocase subunit SecA 2 from Corynebacterium efficiens (strain DSM 44549 / YS-314 / AJ 12310 / JCM 11189 / NBRC 100395).